Consider the following 287-residue polypeptide: Thymidylate synthase (287 aa).

Arg-21 lines the dUMP pocket. Asn-51 is a binding site for (6R)-5,10-methylene-5,6,7,8-tetrahydrofolate. Arg-150–Arg-151 is a dUMP binding site. The active-site Nucleophile is the Cys-170. Residues Arg-190–Asp-193, Asn-201, and His-231–Tyr-233 each bind dUMP. Asp-193 provides a ligand contact to (6R)-5,10-methylene-5,6,7,8-tetrahydrofolate. Ala-286 contacts (6R)-5,10-methylene-5,6,7,8-tetrahydrofolate.

Belongs to the thymidylate synthase family. Bacterial-type ThyA subfamily. In terms of assembly, homodimer.

It localises to the cytoplasm. The catalysed reaction is dUMP + (6R)-5,10-methylene-5,6,7,8-tetrahydrofolate = 7,8-dihydrofolate + dTMP. It participates in pyrimidine metabolism; dTTP biosynthesis. In terms of biological role, catalyzes the reductive methylation of 2'-deoxyuridine-5'-monophosphate (dUMP) to 2'-deoxythymidine-5'-monophosphate (dTMP) while utilizing 5,10-methylenetetrahydrofolate (mTHF) as the methyl donor and reductant in the reaction, yielding dihydrofolate (DHF) as a by-product. This enzymatic reaction provides an intracellular de novo source of dTMP, an essential precursor for DNA biosynthesis. This is Thymidylate synthase from Mycoplasma genitalium (strain ATCC 33530 / DSM 19775 / NCTC 10195 / G37) (Mycoplasmoides genitalium).